The chain runs to 444 residues: Phosphoglucosamine mutase (444 aa).

The active-site Phosphoserine intermediate is the S100. Mg(2+)-binding residues include S100, D240, D242, and D244. Residue S100 is modified to Phosphoserine.

The protein belongs to the phosphohexose mutase family. The cofactor is Mg(2+). In terms of processing, activated by phosphorylation.

The catalysed reaction is alpha-D-glucosamine 1-phosphate = D-glucosamine 6-phosphate. Functionally, catalyzes the conversion of glucosamine-6-phosphate to glucosamine-1-phosphate. In Moorella thermoacetica (strain ATCC 39073 / JCM 9320), this protein is Phosphoglucosamine mutase.